The following is a 274-amino-acid chain: 16S rRNA (guanine(1405)-N(7))-methyltransferase (274 aa).

Residues F64, 102–104, R108, A133, D156, 182–183, L198, and Q207 contribute to the S-adenosyl-L-methionine site; these read HVS and DL.

This sequence belongs to the methyltransferase superfamily. Aminoglycoside resistance family.

It catalyses the reaction guanosine(1405) in 16S rRNA + S-adenosyl-L-methionine = N(7)-methylguanosine(1405) in 16S rRNA + S-adenosyl-L-homocysteine. Its function is as follows. Specifically methylates the N(7) position of guanine 1405 in 16S rRNA. Confers resistance to various aminoglycosides, including gentamicin and kanamycin. The sequence is that of 16S rRNA (guanine(1405)-N(7))-methyltransferase (grm) from Micromonospora echinospora (Micromonospora purpurea).